Consider the following 281-residue polypeptide: Sulfur carrier protein FdhD (281 aa).

The active-site Cysteine persulfide intermediate is the cysteine 117.

It belongs to the FdhD family.

Its subcellular location is the cytoplasm. Required for formate dehydrogenase (FDH) activity. Acts as a sulfur carrier protein that transfers sulfur from IscS to the molybdenum cofactor prior to its insertion into FDH. This chain is Sulfur carrier protein FdhD, found in Xanthomonas euvesicatoria pv. vesicatoria (strain 85-10) (Xanthomonas campestris pv. vesicatoria).